A 298-amino-acid chain; its full sequence is Probable GTP 3',8-cyclase (298 aa).

Residues 4-227 (RYGREIRSFR…MQNRKKYVID (224 aa)) form the Radical SAM core domain. Arg13 is a GTP binding site. 2 residues coordinate [4Fe-4S] cluster: Cys20 and Cys24. Tyr26 is an S-adenosyl-L-methionine binding site. Cys27 is a [4Fe-4S] cluster binding site. Lys61 lines the GTP pocket. Gly65 provides a ligand contact to S-adenosyl-L-methionine. Thr91 lines the GTP pocket. Ser115 lines the S-adenosyl-L-methionine pocket. Position 152 (Lys152) interacts with GTP. Positions 243 and 246 each coordinate [4Fe-4S] cluster. 248 to 250 (RIR) is a binding site for GTP. Cys260 is a [4Fe-4S] cluster binding site.

It belongs to the radical SAM superfamily. MoaA family. It depends on [4Fe-4S] cluster as a cofactor.

It catalyses the reaction GTP + AH2 + S-adenosyl-L-methionine = (8S)-3',8-cyclo-7,8-dihydroguanosine 5'-triphosphate + 5'-deoxyadenosine + L-methionine + A + H(+). It functions in the pathway cofactor biosynthesis; molybdopterin biosynthesis. Catalyzes the cyclization of GTP to (8S)-3',8-cyclo-7,8-dihydroguanosine 5'-triphosphate. The chain is Probable GTP 3',8-cyclase from Methanococcus maripaludis (strain C6 / ATCC BAA-1332).